The following is a 1117-amino-acid chain: Isoleucine--tRNA ligase (1117 aa).

The short motif at proline 64–histidine 74 is the 'HIGH' region element. The short motif at lysine 647–arginine 651 is the 'KMSKS' region element. Lysine 650 is a binding site for ATP.

This sequence belongs to the class-I aminoacyl-tRNA synthetase family. IleS type 2 subfamily. Monomer. Zn(2+) is required as a cofactor.

Its subcellular location is the cytoplasm. It catalyses the reaction tRNA(Ile) + L-isoleucine + ATP = L-isoleucyl-tRNA(Ile) + AMP + diphosphate. In terms of biological role, catalyzes the attachment of isoleucine to tRNA(Ile). As IleRS can inadvertently accommodate and process structurally similar amino acids such as valine, to avoid such errors it has two additional distinct tRNA(Ile)-dependent editing activities. One activity is designated as 'pretransfer' editing and involves the hydrolysis of activated Val-AMP. The other activity is designated 'posttransfer' editing and involves deacylation of mischarged Val-tRNA(Ile). This Ehrlichia ruminantium (strain Welgevonden) protein is Isoleucine--tRNA ligase.